Here is a 580-residue protein sequence, read N- to C-terminus: Glutamine--tRNA ligase (580 aa).

Positions 41–51 (PEPNGYLHIGH) match the 'HIGH' region motif. ATP-binding positions include 42-44 (EPN) and 48-54 (HIGHAKA). Residues aspartate 74 and tyrosine 218 each contribute to the L-glutamine site. ATP-binding positions include threonine 237, 285-286 (RL), and 293-295 (MSK). The 'KMSKS' region motif lies at 292–296 (VMSKR).

This sequence belongs to the class-I aminoacyl-tRNA synthetase family. In terms of assembly, monomer.

The protein resides in the cytoplasm. It catalyses the reaction tRNA(Gln) + L-glutamine + ATP = L-glutaminyl-tRNA(Gln) + AMP + diphosphate. The protein is Glutamine--tRNA ligase of Xylella fastidiosa (strain 9a5c).